A 173-amino-acid chain; its full sequence is MNMGLFYGSSTCYTEMAAEKIRDILGPELVTLHNLKDDAPALMEQYDVLILGIPTWDFGEIQEDWEAVWEQLDDLNLEGKIVALYGMGDQLGYGEWFLDALGMLHDKLALKGVKFVGYWPTEGYEFTSNKPVIADGQLFVGLALDETNQYDLSDERIQTWCEQILGEMAEHYA.

The Flavodoxin-like domain maps to 3–165 (MGLFYGSSTC…RIQTWCEQIL (163 aa)).

The protein belongs to the flavodoxin family. FMN serves as cofactor.

In terms of biological role, low-potential electron donor to a number of redox enzymes. The protein is Flavodoxin 2 (fldB) of Salmonella typhi.